The chain runs to 216 residues: Transmembrane emp24 domain-containing protein eca (216 aa).

Positions 1–20 are cleaved as a signal peptide; it reads MRDQFISLALMLCILHSACG. The Lumenal segment spans residues 21-182; that stretch reads LYFHISETER…FRHTSESTNS (162 aa). The 97-residue stretch at 30-126 folds into the GOLD domain; it reads RKCFIEEVPD…QLRVHLDIQV (97 aa). Residues 134–164 are a coiled coil; it reads ANVAQKEKLTELQLRIRQLLDQVEQITKEQN. A helical transmembrane segment spans residues 183-203; sequence RVLWWSLAQTVVLVCMGFWQM. The Cytoplasmic segment spans residues 204-216; it reads RHLKSFFEAKKLV. The short motif at 213-216 is the Prevents secretion from ER element; the sequence is KKLV.

This sequence belongs to the EMP24/GP25L family.

It is found in the endoplasmic reticulum membrane. Its function is as follows. Eca and bai are essential, though not redundant, for dorsoventral patterning of the embryo. Specifically required during early embryogenesis for the activity of maternal tkv, while the zygotic tkv is not affected. Involved in Golgi organization. In Drosophila erecta (Fruit fly), this protein is Transmembrane emp24 domain-containing protein eca.